A 179-amino-acid chain; its full sequence is tRNA (cytidine(56)-2'-O)-methyltransferase (179 aa).

S-adenosyl-L-methionine contacts are provided by residues Leu-82, 112–116, and 130–137; these read GAEKV and VGNQPHSE.

This sequence belongs to the aTrm56 family. As to quaternary structure, homodimer.

It localises to the cytoplasm. The enzyme catalyses cytidine(56) in tRNA + S-adenosyl-L-methionine = 2'-O-methylcytidine(56) in tRNA + S-adenosyl-L-homocysteine + H(+). In terms of biological role, specifically catalyzes the AdoMet-dependent 2'-O-ribose methylation of cytidine at position 56 in tRNAs. This Methanococcus maripaludis (strain C6 / ATCC BAA-1332) protein is tRNA (cytidine(56)-2'-O)-methyltransferase.